The following is a 198-amino-acid chain: FMN-dependent NADH:quinone oxidoreductase (198 aa).

FMN is bound by residues Ser-10, 16 to 18 (SQS), 94 to 97 (MYNF), and 138 to 141 (TRGG).

This sequence belongs to the azoreductase type 1 family. Homodimer. FMN is required as a cofactor.

It catalyses the reaction 2 a quinone + NADH + H(+) = 2 a 1,4-benzosemiquinone + NAD(+). The catalysed reaction is N,N-dimethyl-1,4-phenylenediamine + anthranilate + 2 NAD(+) = 2-(4-dimethylaminophenyl)diazenylbenzoate + 2 NADH + 2 H(+). In terms of biological role, quinone reductase that provides resistance to thiol-specific stress caused by electrophilic quinones. Its function is as follows. Also exhibits azoreductase activity. Catalyzes the reductive cleavage of the azo bond in aromatic azo compounds to the corresponding amines. The sequence is that of FMN-dependent NADH:quinone oxidoreductase from Shewanella baltica (strain OS185).